A 645-amino-acid chain; its full sequence is Chaperone protein DnaK (645 aa).

Thr200 is modified (phosphothreonine; by autocatalysis). A disordered region spans residues 603-645 (AYSAQKDSGTSTDSTASDTSGNPEERVVDSEYQEIKKDDEDKK). A compositionally biased stretch (low complexity) spans 609–623 (DSGTSTDSTASDTSG). Residues 625-645 (PEERVVDSEYQEIKKDDEDKK) are compositionally biased toward basic and acidic residues.

The protein belongs to the heat shock protein 70 family.

In terms of biological role, acts as a chaperone. This Anaplasma marginale (strain St. Maries) protein is Chaperone protein DnaK.